We begin with the raw amino-acid sequence, 352 residues long: Selenide, water dikinase (352 aa).

C23 is a catalytic residue. Residues K26 and 54–56 contribute to the ATP site; that span reads SRD. Residue D57 coordinates Mg(2+). ATP contacts are provided by residues D74, D97, and 145 to 147; that span reads GHS. D97 is a binding site for Mg(2+). Mg(2+) is bound at residue D233.

The protein belongs to the selenophosphate synthase 1 family. Class I subfamily. Homodimer. Requires Mg(2+) as cofactor.

It carries out the reaction hydrogenselenide + ATP + H2O = selenophosphate + AMP + phosphate + 2 H(+). In terms of biological role, synthesizes selenophosphate from selenide and ATP. This chain is Selenide, water dikinase, found in Shewanella sp. (strain ANA-3).